We begin with the raw amino-acid sequence, 322 residues long: uncharacterized protein (322 aa).

A helical transmembrane segment spans residues 212–234 (VCALLVGAISVATAGAAFSIIIV).

The protein resides in the membrane. This is an uncharacterized protein from Rickettsia prowazekii (strain Madrid E).